We begin with the raw amino-acid sequence, 371 residues long: UPF0284 protein tll2306 (371 aa).

It belongs to the UPF0284 family.

The chain is UPF0284 protein tll2306 from Thermosynechococcus vestitus (strain NIES-2133 / IAM M-273 / BP-1).